The following is a 24-amino-acid chain: Grammistin Pp 4b (24 aa).

In terms of assembly, exists as aggregates of 3-4 molecules. In terms of tissue distribution, expressed by the skin glands.

The protein localises to the secreted. In terms of biological role, thanks to its abundant amphiphilic alpha-helices, it may integrate into membrane phospholipids, leading to lysis of the membrane. Its hemolytic activity is inhibited by phospholipids, but not by cholesterol. Has antibacterial activity with a broad spectrum against various species of bacteria including both Gram-positive and Gram-negative groups. Also has ichthyotoxic activity. This chain is Grammistin Pp 4b, found in Pogonoperca punctata (Clown grouper).